The following is a 171-amino-acid chain: Peptide deformylase (171 aa).

The Fe cation site is built by Cys-91 and His-133. The active site involves Glu-134. His-137 contacts Fe cation.

This sequence belongs to the polypeptide deformylase family. It depends on Fe(2+) as a cofactor.

It catalyses the reaction N-terminal N-formyl-L-methionyl-[peptide] + H2O = N-terminal L-methionyl-[peptide] + formate. Its function is as follows. Removes the formyl group from the N-terminal Met of newly synthesized proteins. Requires at least a dipeptide for an efficient rate of reaction. N-terminal L-methionine is a prerequisite for activity but the enzyme has broad specificity at other positions. The chain is Peptide deformylase from Sodalis glossinidius (strain morsitans).